We begin with the raw amino-acid sequence, 604 residues long: 2-isopropylmalate synthase 2, mitochondrial (604 aa).

The transit peptide at methionine 1–isoleucine 50 directs the protein to the mitochondrion. Residues proline 60 to threonine 335 form the Pyruvate carboxyltransferase domain. Residues aspartate 69, histidine 274, histidine 276, and asparagine 310 each contribute to the a divalent metal cation site.

Belongs to the alpha-IPM synthase/homocitrate synthase family. LeuA type 2 subfamily. Homodimer. A divalent metal cation is required as a cofactor.

The protein localises to the mitochondrion. It carries out the reaction 3-methyl-2-oxobutanoate + acetyl-CoA + H2O = (2S)-2-isopropylmalate + CoA + H(+). The protein operates within amino-acid biosynthesis; L-leucine biosynthesis; L-leucine from 3-methyl-2-oxobutanoate: step 1/4. Its function is as follows. Catalyzes the condensation of the acetyl group of acetyl-CoA with 3-methyl-2-oxobutanoate (2-oxoisovalerate) to form 3-carboxy-3-hydroxy-4-methylpentanoate (2-isopropylmalate). Redundant to LEU4, responsible for about 20% of alpha-IPMS activity. Involved in leucine synthesis. This is 2-isopropylmalate synthase 2, mitochondrial from Saccharomyces cerevisiae (strain ATCC 204508 / S288c) (Baker's yeast).